A 445-amino-acid polypeptide reads, in one-letter code: Glycine--tRNA ligase (445 aa).

Arginine 97 and glutamate 145 together coordinate substrate. Residues 177–179 (RNE), 187–192 (FRTCEF), 262–263 (EV), and 308–311 (GLTR) contribute to the ATP site. 192–196 (FEQME) is a substrate binding site. 304–308 (ETSAG) is a substrate binding site.

Belongs to the class-II aminoacyl-tRNA synthetase family. Homodimer.

Its subcellular location is the cytoplasm. The enzyme catalyses tRNA(Gly) + glycine + ATP = glycyl-tRNA(Gly) + AMP + diphosphate. Catalyzes the attachment of glycine to tRNA(Gly). In Borreliella burgdorferi (strain ATCC 35210 / DSM 4680 / CIP 102532 / B31) (Borrelia burgdorferi), this protein is Glycine--tRNA ligase.